The primary structure comprises 223 residues: Ribonuclease T (223 aa).

The 175-residue stretch at 20–194 (VVIDVETAGF…YDTERTAELF (175 aa)) folds into the Exonuclease domain. Mg(2+)-binding residues include Asp23, Glu25, His181, and Asp186. Catalysis depends on His181, which acts as the Proton donor/acceptor.

Belongs to the RNase T family. As to quaternary structure, homodimer. Requires Mg(2+) as cofactor.

Functionally, trims short 3' overhangs of a variety of RNA species, leaving a one or two nucleotide 3' overhang. Responsible for the end-turnover of tRNA: specifically removes the terminal AMP residue from uncharged tRNA (tRNA-C-C-A). Also appears to be involved in tRNA biosynthesis. This chain is Ribonuclease T, found in Shewanella baltica (strain OS155 / ATCC BAA-1091).